A 131-amino-acid chain; its full sequence is Agouti-signaling protein (131 aa).

The signal sequence occupies residues 1-22 (MDVTRLLLATLVGFLCFLTVHS). Asn-39 carries N-linked (GlcNAc...) asparagine glycosylation. The disordered stretch occupies residues 58–96 (KSKKISRKEAEKRKRSSKKKASIKKVARPPPPSPCVATR). Over residues 70-84 (RKRSSKKKASIKKVA) the composition is skewed to basic residues. Cystine bridges form between Cys-92–Cys-107, Cys-99–Cys-113, Cys-106–Cys-124, Cys-110–Cys-131, and Cys-115–Cys-122. An Agouti domain is found at 92–131 (CVATRDSCKPPAPACCNPCASCQCRFFGSACTCRVLNPNC).

The protein resides in the secreted. In terms of biological role, involved in the regulation of melanogenesis. The binding of ASP to MC1R precludes alpha-MSH initiated signaling and thus blocks production of cAMP, leading to a down-regulation of eumelanogenesis (brown/black pigment) and thus increasing synthesis of pheomelanin (yellow/red pigment). The protein is Agouti-signaling protein of Rattus norvegicus (Rat).